Here is a 230-residue protein sequence, read N- to C-terminus: MNDGDVSRQIQQMVRFIRQEAEEKANEISVSAEEEFNIEKLQLVEAEKKKIRQDYEKKEKQADVRKKIDYSMQLNASRIKVLQAQDDIVNAMKDQAAKDLLNVSRDEYAYKQLLKDLIVQCLLRLKEPSVLLRCREEDLGLVEAVLDDAKEEYAGKAKVHAPEVAVDTKIFLPPPPKSNDPHGLHCSGGVVLASRDGKIVCENTLDARLDVAFRMKLPVIRKSLFGQVTA.

Methionine 1 is subject to N-acetylmethionine. Residues 8-67 are a coiled coil; it reads RQIQQMVRFIRQEAEEKANEISVSAEEEFNIEKLQLVEAEKKKIRQDYEKKEKQADVRKK. Serine 178 bears the Phosphoserine mark.

It belongs to the V-ATPase E subunit family. V-ATPase is a heteromultimeric enzyme composed of a peripheral catalytic V1 complex (components A to H) attached to an integral membrane V0 proton pore complex (components: a, c, c'', d and e).

Its subcellular location is the vacuole membrane. Its function is as follows. Subunit of the peripheral V1 complex of vacuolar ATPase essential for assembly or catalytic function. V-ATPase is responsible for acidifying a variety of intracellular compartments in eukaryotic cells. Required for Golgi organization and vacuole function in embryogenesis. This is V-type proton ATPase subunit E1 (VHA-E1) from Arabidopsis thaliana (Mouse-ear cress).